The primary structure comprises 473 residues: Photosystem II CP43 reaction center protein (473 aa).

The propeptide occupies 1-14 (MKILYSLRRFYHVE). T15 is subject to N-acetylthreonine. T15 bears the Phosphothreonine mark. The next 5 helical transmembrane spans lie at 69–93 (LFEVAHFVPEKPMYEQGLILLPHLA), 134–155 (LLGPETLEESFPFFGYVWKDRN), 178–200 (KALYFGGVYDTWAPGGGDVRKIT), 255–275 (KPFAWARRAFVWSGEAYLSYS), and 291–312 (WFNNTAYPSEFYGPTGPEASQA). E367 contacts [CaMn4O5] cluster. The chain crosses the membrane as a helical span at residues 447-471 (RARAAAAGFEKGIDRDLEPVLYMNP).

This sequence belongs to the PsbB/PsbC family. PsbC subfamily. In terms of assembly, PSII is composed of 1 copy each of membrane proteins PsbA, PsbB, PsbC, PsbD, PsbE, PsbF, PsbH, PsbI, PsbJ, PsbK, PsbL, PsbM, PsbT, PsbX, PsbY, PsbZ, Psb30/Ycf12, at least 3 peripheral proteins of the oxygen-evolving complex and a large number of cofactors. It forms dimeric complexes. Requires Binds multiple chlorophylls and provides some of the ligands for the Ca-4Mn-5O cluster of the oxygen-evolving complex. It may also provide a ligand for a Cl- that is required for oxygen evolution. PSII binds additional chlorophylls, carotenoids and specific lipids. as cofactor.

It is found in the plastid. It localises to the chloroplast thylakoid membrane. Functionally, one of the components of the core complex of photosystem II (PSII). It binds chlorophyll and helps catalyze the primary light-induced photochemical processes of PSII. PSII is a light-driven water:plastoquinone oxidoreductase, using light energy to abstract electrons from H(2)O, generating O(2) and a proton gradient subsequently used for ATP formation. The chain is Photosystem II CP43 reaction center protein from Lolium perenne (Perennial ryegrass).